The sequence spans 186 residues: UPF0397 protein LBUL_1584 (186 aa).

Helical transmembrane passes span 13-33, 46-66, 79-99, 114-134, and 150-170; these read IAAL…ASIP, AFLA…VGFI, TWWN…LYAL, VIFN…LGSV, and QAGL…TILL.

It belongs to the UPF0397 family.

Its subcellular location is the cell membrane. The polypeptide is UPF0397 protein LBUL_1584 (Lactobacillus delbrueckii subsp. bulgaricus (strain ATCC BAA-365 / Lb-18)).